The primary structure comprises 518 residues: Zinc finger protein 449 (518 aa).

In terms of domain architecture, SCAN box spans arginine 30–leucine 112. Over residues asparagine 292–leucine 304 the composition is skewed to polar residues. Residues asparagine 292–cysteine 325 form a disordered region. C2H2-type zinc fingers lie at residues histidine 323 to histidine 345, histidine 351 to histidine 373, tyrosine 379 to histidine 401, tyrosine 407 to histidine 429, histidine 435 to histidine 457, phenylalanine 463 to histidine 485, and tyrosine 491 to histidine 513.

The protein belongs to the krueppel C2H2-type zinc-finger protein family.

Its subcellular location is the nucleus. In terms of biological role, may be involved in transcriptional regulation. This Pan troglodytes (Chimpanzee) protein is Zinc finger protein 449 (ZNF449).